The sequence spans 226 residues: Peroxynitrite isomerase (226 aa).

Positions 21–27 (GSWEGQG) match the GXWXGXG motif. Histidine 191 serves as a coordination point for heme b. The interval 201–226 (SAAEGRLAPGAERPRGAGGRKQGEQS) is disordered.

This sequence belongs to the nitrobindin family. As to quaternary structure, homodimer. Heme b is required as a cofactor.

The enzyme catalyses peroxynitrite = nitrate. Its pathway is nitrogen metabolism. Functionally, heme-binding protein able to scavenge peroxynitrite and to protect free L-tyrosine against peroxynitrite-mediated nitration, by acting as a peroxynitrite isomerase that converts peroxynitrite to nitrate. Therefore, this protein likely plays a role in peroxynitrite sensing and in the detoxification of reactive nitrogen and oxygen species (RNS and ROS, respectively). Is able to bind nitric oxide (NO) in vitro, but may act as a sensor of peroxynitrite levels in vivo. The chain is Peroxynitrite isomerase from Micrococcus luteus (strain ATCC 4698 / DSM 20030 / JCM 1464 / CCM 169 / CCUG 5858 / IAM 1056 / NBRC 3333 / NCIMB 9278 / NCTC 2665 / VKM Ac-2230) (Micrococcus lysodeikticus).